A 548-amino-acid polypeptide reads, in one-letter code: Probable malate:quinone oxidoreductase (548 aa).

Residues 522–548 (KPQAADSTPKAQLKPQPARKEVADIAL) form a disordered region. Residues 539-548 (ARKEVADIAL) are compositionally biased toward basic and acidic residues.

This sequence belongs to the MQO family. FAD serves as cofactor.

The catalysed reaction is (S)-malate + a quinone = a quinol + oxaloacetate. It participates in carbohydrate metabolism; tricarboxylic acid cycle; oxaloacetate from (S)-malate (quinone route): step 1/1. This is Probable malate:quinone oxidoreductase from Escherichia fergusonii (strain ATCC 35469 / DSM 13698 / CCUG 18766 / IAM 14443 / JCM 21226 / LMG 7866 / NBRC 102419 / NCTC 12128 / CDC 0568-73).